We begin with the raw amino-acid sequence, 604 residues long: MAELGAGSLLTGDPAFNYQEHELNERLKRLYPAVNEEETPLPRSWSPKDKYSYIGLSQNNLRVHYKGHGKNHKDAASVRATHPIPAACGIYYFEVKIVSKGRDGYMGIGLSAQGVNMNRLPGWDKHSYGYHGDDGHSFCSSGTGQPYGPTFTTGDVIGCCVNLINNTCFYTKNGHSLGVAFTDLPPNLYPTVGLQTPGEIVDANFGQQPFVFDIEDYMSEWRAKIHSMIARFPIGERLGDWQAVLQNMVSSYLVHHGYCATAMAFARATETMIQEDQTSIKNRQRIQKLVLAGRVGEAIDATQQLYPGLLEHNPNLLFMLKCRQFVEMVNGTDSEVRCFSVRSPKSQDSYPGSPNMSPRHGATNPHLHSTGADSPTCSNGVTPPNKNKSHNKYTGISSASSSPSSSPSSVNYSESNSTDSTKSQPHSATSNQETSDSEMEIEAEHYSNGVTESSTRIMNGTYKHQEILQADDNSVDDTCSSRQLCGGNQAATERMIQFGRELQTLSEQLCRQYGKNATHKKMLQDAFSLLAYSDPWNCPVGQQLDPMQREAICSALNSAILESQNLPKQPPLMLALGQATECVQLMARVRSGSCSFARVDNFLH.

The B30.2/SPRY domain maps to 23 to 210; the sequence is LNERLKRLYP…VDANFGQQPF (188 aa). Positions 241–273 constitute a LisH domain; the sequence is WQAVLQNMVSSYLVHHGYCATAMAFARATETMI. The region spanning 279-336 is the CTLH domain; sequence SIKNRQRIQKLVLAGRVGEAIDATQQLYPGLLEHNPNLLFMLKCRQFVEMVNGTDSEV. The disordered stretch occupies residues 342–454; it reads RSPKSQDSYP…HYSNGVTESS (113 aa). Polar residues-rich tracts occupy residues 343–356 and 371–396; these read SPKSQDSYPGSPNM and GADSPTCSNGVTPPNKNKSHNKYTGI. Residues 397–420 show a composition bias toward low complexity; sequence SSASSSPSSSPSSVNYSESNSTDS. Over residues 421–434 the composition is skewed to polar residues; sequence TKSQPHSATSNQET.

It belongs to the RANBP9/10 family.

Functionally, may act as an adapter protein to couple membrane receptors to intracellular signaling pathways. The chain is Ran-binding protein 10 (ranbp10) from Danio rerio (Zebrafish).